The following is a 337-amino-acid chain: Biotin synthase (337 aa).

One can recognise a Radical SAM core domain in the interval 39-267; it reads QEVQVCTLLS…KAMVRLSAGR (229 aa). The [4Fe-4S] cluster site is built by C54, C58, and C61. Residues C98, C130, C190, and R262 each coordinate [2Fe-2S] cluster.

This sequence belongs to the radical SAM superfamily. Biotin synthase family. As to quaternary structure, homodimer. [4Fe-4S] cluster serves as cofactor. [2Fe-2S] cluster is required as a cofactor.

It carries out the reaction (4R,5S)-dethiobiotin + (sulfur carrier)-SH + 2 reduced [2Fe-2S]-[ferredoxin] + 2 S-adenosyl-L-methionine = (sulfur carrier)-H + biotin + 2 5'-deoxyadenosine + 2 L-methionine + 2 oxidized [2Fe-2S]-[ferredoxin]. The protein operates within cofactor biosynthesis; biotin biosynthesis; biotin from 7,8-diaminononanoate: step 2/2. Catalyzes the conversion of dethiobiotin (DTB) to biotin by the insertion of a sulfur atom into dethiobiotin via a radical-based mechanism. In Cytophaga hutchinsonii (strain ATCC 33406 / DSM 1761 / CIP 103989 / NBRC 15051 / NCIMB 9469 / D465), this protein is Biotin synthase.